Consider the following 245-residue polypeptide: Heavy metal-associated isoprenylated plant protein 1 (245 aa).

In terms of domain architecture, HMA 1 spans 28 to 92 (PVHVVLKIDF…KLQKKSKKKV (65 aa)). Residues cysteine 39 and cysteine 42 each coordinate a metal cation. Residues 91-113 (KVELISPKPKKDTKENNEKKAND) are disordered. The span at 99–113 (PKKDTKENNEKKAND) shows a compositional bias: basic and acidic residues. The HMA 2 domain occupies 121-188 (VTTVVLKVNC…KLKKTVQVVP (68 aa)). The a metal cation site is built by cysteine 132 and cysteine 135. Cysteine 242 carries the post-translational modification Cysteine methyl ester. A lipid anchor (S-farnesyl cysteine) is attached at cysteine 242. A propeptide spans 243–245 (SVM) (removed in mature form).

The protein belongs to the HIPP family.

In terms of biological role, heavy-metal-binding protein. This chain is Heavy metal-associated isoprenylated plant protein 1, found in Arabidopsis thaliana (Mouse-ear cress).